We begin with the raw amino-acid sequence, 360 residues long: Peptide chain release factor 1 (360 aa).

N5-methylglutamine is present on Gln-237.

This sequence belongs to the prokaryotic/mitochondrial release factor family. Methylated by PrmC. Methylation increases the termination efficiency of RF1.

It localises to the cytoplasm. Functionally, peptide chain release factor 1 directs the termination of translation in response to the peptide chain termination codons UAG and UAA. The polypeptide is Peptide chain release factor 1 (Pseudomonas putida (strain ATCC 700007 / DSM 6899 / JCM 31910 / BCRC 17059 / LMG 24140 / F1)).